The chain runs to 441 residues: Gluconate 2-dehydrogenase cytochrome c subunit (441 aa).

The N-terminal stretch at Met1–Ala19 is a signal peptide. 3 consecutive Cytochrome c domains span residues Ala26 to Val129, Pro173 to Gly289, and Asp312 to Trp403. Heme c contacts are provided by Cys40, Cys43, His44, Cys188, Cys191, His192, Cys325, Cys328, and His329.

In terms of assembly, heterotrimer. FAD serves as cofactor. In terms of processing, binds 3 heme c groupd covalently per subunit.

The protein resides in the cell membrane. It carries out the reaction D-gluconate + A = 2-dehydro-D-gluconate + AH2. Part of the heterotrimer that catalyzes the conversion of D-gluconate to 2-dehydro-D-gluconate. The polypeptide is Gluconate 2-dehydrogenase cytochrome c subunit (Pantoea cypripedii (Pectobacterium cypripedii)).